Reading from the N-terminus, the 101-residue chain is MKIIGSAFLGIVFCILLAFAIIFGIEIDYYHQGDYLKYLNFLDKLHQYNKIDNSFEYSNHYESALIGVIVLTIICFLIFITPIIIIVITKIKEKKVINKKI.

Helical transmembrane passes span 3 to 23 (IIGSAFLGIVFCILLAFAIIF) and 68 to 88 (VIVLTIICFLIFITPIIIIVI).

The protein resides in the cell membrane. This is an uncharacterized protein from Ureaplasma parvum serovar 3 (strain ATCC 700970).